A 408-amino-acid polypeptide reads, in one-letter code: Mitochondrial outer membrane protein SLC25A46 (408 aa).

Disordered stretches follow at residues 1-23 (MHPR…EEPC) and 52-80 (HWGE…LGAG). The span at 66 to 76 (LGAAGLNEEPG) shows a compositional bias: low complexity. The stretch at 86–177 (QLNRFAGFGI…GIISEFTPLP (92 aa)) is one Solcar 1 repeat. The next 6 membrane-spanning stretches (helical) occupy residues 93–113 (FGIG…CIVL), 157–177 (FIVQ…TPLP), 189–209 (IGGH…FYSA), 248–268 (LLPL…HYVI), 304–324 (FPEL…LYPL), and 373–393 (LGFY…VAVL). One copy of the Solcar 2 repeat lies at 301–403 (DAYFPELIAS…QLTKIIYSTL (103 aa)).

The protein belongs to the mitochondrial carrier (TC 2.A.29) family.

It localises to the mitochondrion outer membrane. In terms of biological role, transmembrane protein of the mitochondrial outer membrane that controls mitochondrial organization. May regulate the assembly of the MICOS (mitochondrial contact site and cristae organizing system) complex which is essential to the biogenesis and dynamics of mitochondrial cristae, the inwards folds of the inner mitochondrial membrane. Through its interaction with the EMC (endoplasmic reticulum membrane protein complex), could regulate mitochondrial lipid homeostasis and thereby mitochondrial fission. The protein is Mitochondrial outer membrane protein SLC25A46 of Gallus gallus (Chicken).